The chain runs to 290 residues: NAD kinase (290 aa).

D72 functions as the Proton acceptor in the catalytic mechanism. Residues 72–73, K77, 145–146, D175, 186–191, and A210 each bind NAD(+); these read DG, NE, and TAYSLS.

Belongs to the NAD kinase family. The cofactor is a divalent metal cation.

The protein localises to the cytoplasm. It carries out the reaction NAD(+) + ATP = ADP + NADP(+) + H(+). Its function is as follows. Involved in the regulation of the intracellular balance of NAD and NADP, and is a key enzyme in the biosynthesis of NADP. Catalyzes specifically the phosphorylation on 2'-hydroxyl of the adenosine moiety of NAD to yield NADP. The polypeptide is NAD kinase (Bacteroides fragilis (strain ATCC 25285 / DSM 2151 / CCUG 4856 / JCM 11019 / LMG 10263 / NCTC 9343 / Onslow / VPI 2553 / EN-2)).